We begin with the raw amino-acid sequence, 144 residues long: 3-dehydroquinate dehydratase (144 aa).

Catalysis depends on Y23, which acts as the Proton acceptor. Substrate contacts are provided by N74, H80, and D87. Catalysis depends on H100, which acts as the Proton donor. Substrate-binding positions include 101–102 (LS) and R111.

It belongs to the type-II 3-dehydroquinase family. As to quaternary structure, homododecamer.

The catalysed reaction is 3-dehydroquinate = 3-dehydroshikimate + H2O. Its pathway is metabolic intermediate biosynthesis; chorismate biosynthesis; chorismate from D-erythrose 4-phosphate and phosphoenolpyruvate: step 3/7. In terms of biological role, catalyzes a trans-dehydration via an enolate intermediate. The chain is 3-dehydroquinate dehydratase from Haemophilus ducreyi (strain 35000HP / ATCC 700724).